A 264-amino-acid chain; its full sequence is Thymidylate synthase (264 aa).

Arg-21 is a binding site for dUMP. Residue His-51 participates in (6R)-5,10-methylene-5,6,7,8-tetrahydrofolate binding. 126 to 127 is a binding site for dUMP; it reads RR. Catalysis depends on Cys-146, which acts as the Nucleophile. Residues 166–169, Asn-177, and 207–209 each bind dUMP; these read RSAD and HIY. Asp-169 is a (6R)-5,10-methylene-5,6,7,8-tetrahydrofolate binding site. Position 263 (Ala-263) interacts with (6R)-5,10-methylene-5,6,7,8-tetrahydrofolate.

This sequence belongs to the thymidylate synthase family. Bacterial-type ThyA subfamily. As to quaternary structure, homodimer.

The protein resides in the cytoplasm. It catalyses the reaction dUMP + (6R)-5,10-methylene-5,6,7,8-tetrahydrofolate = 7,8-dihydrofolate + dTMP. It functions in the pathway pyrimidine metabolism; dTTP biosynthesis. Functionally, catalyzes the reductive methylation of 2'-deoxyuridine-5'-monophosphate (dUMP) to 2'-deoxythymidine-5'-monophosphate (dTMP) while utilizing 5,10-methylenetetrahydrofolate (mTHF) as the methyl donor and reductant in the reaction, yielding dihydrofolate (DHF) as a by-product. This enzymatic reaction provides an intracellular de novo source of dTMP, an essential precursor for DNA biosynthesis. The protein is Thymidylate synthase of Coxiella burnetii (strain Dugway 5J108-111).